The primary structure comprises 114 residues: Replication initiation control protein YabA (114 aa).

4 residues coordinate Zn(2+): His79, Cys81, Cys95, and Cys98.

It belongs to the YabA family. Homotetramer. Interacts with both DnaA and DnaN, acting as a bridge between these two proteins. The cofactor is Zn(2+).

The protein localises to the cytoplasm. Its subcellular location is the nucleoid. Functionally, involved in control of chromosome replication initiation. Inhibits the cooperative binding of DnaA to the oriC region, thus negatively regulating initiation of chromosome replication. Inhibits the ability of DnaA-ATP to form a helix on DNA; does not disassemble preformed DnaA-DNA helices. Decreases the residence time of DnaA on the chromosome at its binding sites (oriC, replication forks and promoter-binding sites). Tethers DnaA to the replication machinery via the DNA polymerase beta sliding clamp subunit (dnaN). Associates with oriC and other DnaA targets on the chromosome in a DnaA-dependent manner. The protein is Replication initiation control protein YabA of Lactobacillus johnsonii (strain CNCM I-12250 / La1 / NCC 533).